The primary structure comprises 299 residues: 33 kDa chaperonin (299 aa).

2 cysteine pairs are disulfide-bonded: C234–C236 and C268–C271.

The protein belongs to the HSP33 family. Post-translationally, under oxidizing conditions two disulfide bonds are formed involving the reactive cysteines. Under reducing conditions zinc is bound to the reactive cysteines and the protein is inactive.

The protein localises to the cytoplasm. Its function is as follows. Redox regulated molecular chaperone. Protects both thermally unfolding and oxidatively damaged proteins from irreversible aggregation. Plays an important role in the bacterial defense system toward oxidative stress. This chain is 33 kDa chaperonin, found in Pseudomonas putida (strain ATCC 700007 / DSM 6899 / JCM 31910 / BCRC 17059 / LMG 24140 / F1).